Consider the following 89-residue polypeptide: Small ribosomal subunit protein uS15 (89 aa).

Residues 1-20 (MSITAERKAELIKTHARGEA) show a composition bias toward basic and acidic residues. The interval 1-24 (MSITAERKAELIKTHARGEADTGS) is disordered.

Belongs to the universal ribosomal protein uS15 family. Part of the 30S ribosomal subunit. Forms a bridge to the 50S subunit in the 70S ribosome, contacting the 23S rRNA.

One of the primary rRNA binding proteins, it binds directly to 16S rRNA where it helps nucleate assembly of the platform of the 30S subunit by binding and bridging several RNA helices of the 16S rRNA. Its function is as follows. Forms an intersubunit bridge (bridge B4) with the 23S rRNA of the 50S subunit in the ribosome. The polypeptide is Small ribosomal subunit protein uS15 (Phenylobacterium zucineum (strain HLK1)).